A 357-amino-acid polypeptide reads, in one-letter code: Phospho-N-acetylmuramoyl-pentapeptide-transferase (357 aa).

10 helical membrane-spanning segments follow: residues 23-43, 70-90, 91-111, 127-147, 171-191, 196-216, 236-256, 260-280, 286-306, and 334-354; these read AIFS…YFIY, TMGG…YCNL, SNIY…IGFI, LKWK…MIKI, YLYI…VNLT, GLAI…SLFS, LAIL…FNSY, VFMG…IAIL, LLII…LQII, and LIIV…LISL.

Belongs to the glycosyltransferase 4 family. MraY subfamily. The cofactor is Mg(2+).

The protein localises to the cell inner membrane. It carries out the reaction UDP-N-acetyl-alpha-D-muramoyl-L-alanyl-gamma-D-glutamyl-meso-2,6-diaminopimeloyl-D-alanyl-D-alanine + di-trans,octa-cis-undecaprenyl phosphate = di-trans,octa-cis-undecaprenyl diphospho-N-acetyl-alpha-D-muramoyl-L-alanyl-D-glutamyl-meso-2,6-diaminopimeloyl-D-alanyl-D-alanine + UMP. Its pathway is cell wall biogenesis; peptidoglycan biosynthesis. Its function is as follows. Catalyzes the initial step of the lipid cycle reactions in the biosynthesis of the cell wall peptidoglycan: transfers peptidoglycan precursor phospho-MurNAc-pentapeptide from UDP-MurNAc-pentapeptide onto the lipid carrier undecaprenyl phosphate, yielding undecaprenyl-pyrophosphoryl-MurNAc-pentapeptide, known as lipid I. The sequence is that of Phospho-N-acetylmuramoyl-pentapeptide-transferase from Buchnera aphidicola subsp. Acyrthosiphon pisum (strain 5A).